The sequence spans 509 residues: Maturase K (509 aa).

Belongs to the intron maturase 2 family. MatK subfamily.

It localises to the plastid. It is found in the chloroplast. Functionally, usually encoded in the trnK tRNA gene intron. Probably assists in splicing its own and other chloroplast group II introns. The sequence is that of Maturase K from Nicotiana tomentosiformis (Tobacco).